Here is a 147-residue protein sequence, read N- to C-terminus: Small ribosomal subunit protein uS13 (147 aa).

Positions 115–147 (SYKGRRHEAGLPVRGQRTKSTFRNSSSVGVKRS) are disordered. A compositionally biased stretch (polar residues) spans 132–147 (TKSTFRNSSSVGVKRS).

It belongs to the universal ribosomal protein uS13 family. As to quaternary structure, part of the 30S ribosomal subunit. Forms a loose heterodimer with protein S19. Forms two bridges to the 50S subunit in the 70S ribosome.

Located at the top of the head of the 30S subunit, it contacts several helices of the 16S rRNA. In the 70S ribosome it contacts the 23S rRNA (bridge B1a) and protein L5 of the 50S subunit (bridge B1b), connecting the 2 subunits; these bridges are implicated in subunit movement. The protein is Small ribosomal subunit protein uS13 of Methanobrevibacter smithii (strain ATCC 35061 / DSM 861 / OCM 144 / PS).